The following is a 251-amino-acid chain: Cell division protein ZapD (251 aa).

It belongs to the ZapD family. As to quaternary structure, interacts with FtsZ.

It localises to the cytoplasm. Cell division factor that enhances FtsZ-ring assembly. Directly interacts with FtsZ and promotes bundling of FtsZ protofilaments, with a reduction in FtsZ GTPase activity. This is Cell division protein ZapD from Burkholderia vietnamiensis (strain G4 / LMG 22486) (Burkholderia cepacia (strain R1808)).